An 880-amino-acid polypeptide reads, in one-letter code: Translation initiation factor IF-2 (880 aa).

Residues M1–Q251 form a disordered region. Residues P58–P79 are compositionally biased toward low complexity. Residues A115–K183 show a composition bias toward basic and acidic residues. 2 stretches are compositionally biased toward low complexity: residues A184–D215 and A233–K250. The tr-type G domain occupies P376–K547. The tract at residues G385–T392 is G1. G385–T392 serves as a coordination point for GTP. The tract at residues G410–H414 is G2. Residues D433–G436 are G3. GTP-binding positions include D433–H437 and N487–D490. The interval N487–D490 is G4. Residues S523–K525 form a G5 region.

The protein belongs to the TRAFAC class translation factor GTPase superfamily. Classic translation factor GTPase family. IF-2 subfamily.

Its subcellular location is the cytoplasm. One of the essential components for the initiation of protein synthesis. Protects formylmethionyl-tRNA from spontaneous hydrolysis and promotes its binding to the 30S ribosomal subunits. Also involved in the hydrolysis of GTP during the formation of the 70S ribosomal complex. The polypeptide is Translation initiation factor IF-2 (Rhodopseudomonas palustris (strain BisB18)).